The primary structure comprises 880 residues: MGTTAPGPICLLDLCDQKLLDFVCNVDNKDFMWLKEIEEEAERMFIREFSNEPELMPKTPSQKNRRKKRRVSNIQDENRDPVRKRLSRRKSRSSQVGTRHLRSKPVTIVEENGFPVLQRITRATAAAAAAAAAASVASASSSSTAGSPTVLTKKAVVEISTSERLSAELQLTKLKGSLPPSPVSQGTLTSEEELTPKKSEAGKLDSVTVNSLKATPQSPKNRGVGEGRSVSKLKIARASWGLQDSPGSTDSPWQERVLSPILLNNILPTTAKSPLGNIRSVRRSLISQDSQVPLASKYNLVAKQENGSRRSSRRIAKKAGKEPEASARIICHSYLERLLNVEVPQNVGLEQEPVEVAEPEEAEEEQEVSKNSGCPSKPRSATKIAISTPTSKPAAAGQTTTVEEQEAELDQTDGHREPPQSVRRKRSYKQAISEPDEEQLEDEELQPCQNKTPSPPCPANKVVRPLRTFLHTVQKNQMLMTPTLASRSSVMKSFIKRNTPLRVDPKCSFVEKERQRLESLRRKEEAEQRRRQKVEEDKRRRLEEVKLKREERLRKVLQARERVEQMKEEKKKQIEQKFAQIDEKTEKAKEERLAEKAKKKATAKKMEEVEARRKQEEEARRLRWLQQEEEERRHQEMLQRKKEEEQERRKAAEARRLAEQREQERRREQERREQERREQERREQERKEQERREQEQERLRAKREMQEREKALRLQKERLQKELEEKKRKEEQQRLAEQQLQEEQAKKAKEVAAARKVLNMTVDVQSPVCTSYQMTPQGPKSIPKISVDDYGMDLNSDDSTDDESHPRKPIPSWAKGTQLSQAIVHQYYHPPNILELFGSILPLDLEDIFKKRKTRYHKRTSSAVWNSPPLKATMVPSSGD.

Residues 52–104 (EPELMPKTPSQKNRRKKRRVSNIQDENRDPVRKRLSRRKSRSSQVGTRHLRSK) form a disordered region. Ser-72, Ser-142, and Ser-147 each carry phosphoserine. Phosphothreonine occurs at positions 149 and 189. Residues 175 to 229 (KGSLPPSPVSQGTLTSEEELTPKKSEAGKLDSVTVNSLKATPQSPKNRGVGEGRS) form a disordered region. Ser-190 is subject to Phosphoserine. Residues 194-203 (LTPKKSEAGK) are compositionally biased toward basic and acidic residues. Phosphothreonine is present on residues Thr-195 and Thr-215. A compositionally biased stretch (polar residues) spans 207–220 (VTVNSLKATPQSPK). 6 positions are modified to phosphoserine: Ser-218, Ser-239, Ser-245, Ser-248, Ser-251, and Ser-259. At Thr-270 the chain carries Phosphothreonine. Phosphoserine is present on residues Ser-284 and Ser-290. Disordered stretches follow at residues 303–322 (KQEN…AGKE) and 350–461 (EQEP…PANK). Positions 352 to 366 (EPVEVAEPEEAEEEQ) are enriched in acidic residues. A Phosphoserine modification is found at Ser-376. Thr-382 is modified (phosphothreonine). Residues 385–402 (AISTPTSKPAAAGQTTTV) show a composition bias toward polar residues. A Phosphoserine modification is found at Ser-421. The span at 434–445 (EPDEEQLEDEEL) shows a compositional bias: acidic residues. Asn-450 carries N-linked (GlcNAc...) asparagine glycosylation. Thr-452 is modified (phosphothreonine). 2 positions are modified to phosphoserine: Ser-454 and Ser-488. Residues 506 to 733 (KCSFVEKERQ…EEKKRKEEQQ (228 aa)) are SAH. Positions 506–759 (KCSFVEKERQ…EVAAARKVLN (254 aa)) form a coiled coil. 4 disordered regions span residues 513–541 (ERQR…KRRR), 563–617 (VEQM…KQEE), 629–713 (EEER…KALR), and 775–813 (TPQG…IPSW). Basic and acidic residues-rich tracts occupy residues 563–596 (VEQM…LAEK), 604–617 (KKME…KQEE), and 630–713 (EERR…KALR). The tract at residues 794-868 (LNSDDSTDDE…RTSSAVWNSP (75 aa)) is IN box. Residues Ser-796 and Ser-799 each carry the phosphoserine modification. A Phosphothreonine modification is found at Thr-800. Thr-860 carries the post-translational modification Phosphothreonine; by AURKB. Phosphoserine occurs at positions 861, 862, and 867.

The protein belongs to the INCENP family. Component of the chromosomal passenger complex (CPC) composed of at least BIRC5/survivin, CDCA8/borealin, INCENP, AURKB or AURKC; in the complex binds directly to AURKB or AURKC via the IN box, and forms a triple-helix bundle-based subcomplex with BIRC5 and CDCA8 via its N-terminus. The reported homodimerization is questioned as the SAH domain is shown to be monomeric. Interacts with H2AZ1. Interacts with CBX1 and CBX3. Interacts with tubulin beta chain. Interacts with EVI5. Interacts with CBX5; POGZ and INCENP compete for interaction with CBX5. Interacts with POGZ. Interacts with JTB. In terms of processing, phosphorylation by AURKB at its C-terminal part is important for AURKB activation by INCENP.

Its subcellular location is the chromosome. It localises to the centromere. It is found in the cytoplasm. The protein resides in the cytoskeleton. The protein localises to the spindle. Its subcellular location is the nucleus. It localises to the kinetochore. It is found in the midbody. Its function is as follows. Component of the chromosomal passenger complex (CPC), a complex that acts as a key regulator of mitosis. The CPC complex has essential functions at the centromere in ensuring correct chromosome alignment and segregation and is required for chromatin-induced microtubule stabilization and spindle assembly. Acts as a scaffold regulating CPC localization and activity. The C-terminus associates with AURKB or AURKC, the N-terminus associated with BIRC5/survivin and CDCA8/borealin tethers the CPC to the inner centromere, and the microtubule binding activity within the central SAH domain directs AURKB/C toward substrates near microtubules. The flexibility of the SAH domain is proposed to allow AURKB/C to follow substrates on dynamic microtubules while ensuring CPC docking to static chromatin. Activates AURKB and AURKC. Controls the kinetochore localization of BUB1. This chain is Inner centromere protein (Incenp), found in Mus musculus (Mouse).